We begin with the raw amino-acid sequence, 374 residues long: MSKRDYYEVLGVERGATEADLKKAYRRLAMKYHPDRNPGDKESEDKFKEANEAYEVLSDASKRAAFDQYGHAGVDPSMGGGGAGFGGANFSDIFGDVFSDFFGGGRGGGRGGAQRGSDLRYTLELNLEEAVRGTTVSIRVPTLVNCQPCDGSGAKKGSTPSTCPTCGGIGQVRMQQGFFSVQQTCPRCHGQGKIITDPCTSCHGEGRVEEYKTLSVKVPAGVDTGDRIRLSGEGEAGTHGGPTGDLYVVISVREHEIFQRDGKHLYCEVPISYTDAALGGELEVPTLDGRVKLKIPEGTQTGKQFRLRGKGVAPVRGGGAGDLLCRVAVETPVNLSRRQRELLEELRDSLEGDSSHSPKASGWFDGVKRFFGDL.

Positions 5-70 (DYYEVLGVER…SKRAAFDQYG (66 aa)) constitute a J domain. The CR-type zinc-finger motif lies at 133-211 (GTTVSIRVPT…CHGEGRVEEY (79 aa)). Zn(2+) contacts are provided by cysteine 146, cysteine 149, cysteine 163, cysteine 166, cysteine 185, cysteine 188, cysteine 199, and cysteine 202. CXXCXGXG motif repeat units follow at residues 146–153 (CQPCDGSG), 163–170 (CPTCGGIG), 185–192 (CPRCHGQG), and 199–206 (CTSCHGEG).

The protein belongs to the DnaJ family. In terms of assembly, homodimer. The cofactor is Zn(2+).

The protein localises to the cytoplasm. In terms of biological role, participates actively in the response to hyperosmotic and heat shock by preventing the aggregation of stress-denatured proteins and by disaggregating proteins, also in an autonomous, DnaK-independent fashion. Unfolded proteins bind initially to DnaJ; upon interaction with the DnaJ-bound protein, DnaK hydrolyzes its bound ATP, resulting in the formation of a stable complex. GrpE releases ADP from DnaK; ATP binding to DnaK triggers the release of the substrate protein, thus completing the reaction cycle. Several rounds of ATP-dependent interactions between DnaJ, DnaK and GrpE are required for fully efficient folding. Also involved, together with DnaK and GrpE, in the DNA replication of plasmids through activation of initiation proteins. The protein is Chaperone protein DnaJ of Pseudomonas putida (strain ATCC 700007 / DSM 6899 / JCM 31910 / BCRC 17059 / LMG 24140 / F1).